A 98-amino-acid polypeptide reads, in one-letter code: Histone H4-like protein type G (98 aa).

The DNA-binding element occupies 17-21; the sequence is KCHRK.

The protein belongs to the histone H4 family. As to quaternary structure, the nucleosome is a histone octamer containing two molecules each of H2A, H2B, H3 and H4 assembled in one H3-H4 heterotetramer and two H2A-H2B heterodimers. The octamer wraps approximately 147 bp of DNA.

It is found in the nucleus. Its subcellular location is the chromosome. Functionally, core component of nucleosome. Nucleosomes wrap and compact DNA into chromatin, limiting DNA accessibility to the cellular machineries which require DNA as a template. Histones thereby play a central role in transcription regulation, DNA repair, DNA replication and chromosomal stability. DNA accessibility is regulated via a complex set of post-translational modifications of histones, also called histone code, and nucleosome remodeling. The chain is Histone H4-like protein type G from Homo sapiens (Human).